The chain runs to 188 residues: Probable nicotinate-nucleotide adenylyltransferase (188 aa).

The protein belongs to the NadD family.

The catalysed reaction is nicotinate beta-D-ribonucleotide + ATP + H(+) = deamido-NAD(+) + diphosphate. It functions in the pathway cofactor biosynthesis; NAD(+) biosynthesis; deamido-NAD(+) from nicotinate D-ribonucleotide: step 1/1. Functionally, catalyzes the reversible adenylation of nicotinate mononucleotide (NaMN) to nicotinic acid adenine dinucleotide (NaAD). The chain is Probable nicotinate-nucleotide adenylyltransferase from Rhizobium meliloti (strain 1021) (Ensifer meliloti).